A 487-amino-acid chain; its full sequence is MKAQPKASHFIDGEYVEDTAGTVIESIYPATGEVIARLHAATPDIVEKAIAAAKRAQPEWAAMSPTARGRILKRAAEIMRERNRELSELETLDTGKPIQETIVADPTSGADSFEFFGGIAAAALNGDYIPLGGDFAYTKRVPLGVCVGIGAWNYPQQIACWKGAPALAAGNSMVFKPSENTPLGALKIAEILIEAGLPKGLYNVIQGDRSTGPLLVNHPDVAKVSLTGSVPTGKKVAAAAAAELKHVTMELGGKSPLIVFDDADLESAIGGAMLGNFYSTGQVCSNGTRVFVQRKIKDAFLARLKERTEAIVIGDPMDEATQLGPMVSKAQRDKVLSYIEQGKAEGARLVTGGGIPNAVNTEGTYIQPTVFADVTDEMTIAREEIFGPVMCVLDFDDEAEVVARANATEFGLSAGVFTADLTRAHRVVDQLEAGTLWINTYNLAPVEIPFGGSKQSGFGRENSVAALNHYTELKTVYVGMGKVEAPY.

Residues S26, I27, and D93 each contribute to the K(+) site. 150–152 (GAW) lines the NAD(+) pocket. Catalysis depends on K162, which acts as the Charge relay system. NAD(+)-binding positions include 176–179 (KPSE) and 229–232 (SVPT). L244 serves as a coordination point for K(+). E250 serves as the catalytic Proton acceptor. 3 residues coordinate NAD(+): G252, C284, and E384. C284 acts as the Nucleophile in catalysis. A Cysteine sulfenic acid (-SOH) modification is found at C284. 2 residues coordinate K(+): K454 and G457. Residue E461 is the Charge relay system of the active site.

It belongs to the aldehyde dehydrogenase family. Dimer of dimers. It depends on K(+) as a cofactor.

It carries out the reaction betaine aldehyde + NAD(+) + H2O = glycine betaine + NADH + 2 H(+). It functions in the pathway amine and polyamine biosynthesis; betaine biosynthesis via choline pathway; betaine from betaine aldehyde: step 1/1. Functionally, involved in the biosynthesis of the osmoprotectant glycine betaine. Catalyzes the irreversible oxidation of betaine aldehyde to the corresponding acid. This chain is Betaine aldehyde dehydrogenase, found in Sinorhizobium fredii (strain NBRC 101917 / NGR234).